The sequence spans 481 residues: Cysteine--tRNA ligase (481 aa).

Residue C27 participates in Zn(2+) binding. Residues 29–39 (PTVYNYAHIGN) carry the 'HIGH' region motif. Zn(2+) is bound by residues C222, H247, and E251. Positions 279–283 (KMSKS) match the 'KMSKS' region motif. K282 lines the ATP pocket.

It belongs to the class-I aminoacyl-tRNA synthetase family. As to quaternary structure, monomer. Zn(2+) is required as a cofactor.

It is found in the cytoplasm. It carries out the reaction tRNA(Cys) + L-cysteine + ATP = L-cysteinyl-tRNA(Cys) + AMP + diphosphate. This Borrelia hermsii (strain HS1 / DAH) protein is Cysteine--tRNA ligase.